A 75-amino-acid chain; its full sequence is Acylphosphatase-like protein MJ1405 (75 aa).

Residues 8 to 75 (TYEIIIYGRI…TNFWRVRKCK (68 aa)) enclose the Acylphosphatase-like domain.

In Methanocaldococcus jannaschii (strain ATCC 43067 / DSM 2661 / JAL-1 / JCM 10045 / NBRC 100440) (Methanococcus jannaschii), this protein is Acylphosphatase-like protein MJ1405.